We begin with the raw amino-acid sequence, 333 residues long: 4-hydroxy-3-methylbut-2-enyl diphosphate reductase (333 aa).

Cysteine 33 contacts [4Fe-4S] cluster. 2 residues coordinate (2E)-4-hydroxy-3-methylbut-2-enyl diphosphate: histidine 62 and histidine 95. Dimethylallyl diphosphate is bound by residues histidine 62 and histidine 95. Isopentenyl diphosphate-binding residues include histidine 62 and histidine 95. [4Fe-4S] cluster is bound at residue cysteine 117. A (2E)-4-hydroxy-3-methylbut-2-enyl diphosphate-binding site is contributed by histidine 145. Histidine 145 contributes to the dimethylallyl diphosphate binding site. Histidine 145 provides a ligand contact to isopentenyl diphosphate. The active-site Proton donor is glutamate 147. (2E)-4-hydroxy-3-methylbut-2-enyl diphosphate is bound at residue threonine 186. Cysteine 216 lines the [4Fe-4S] cluster pocket. 4 residues coordinate (2E)-4-hydroxy-3-methylbut-2-enyl diphosphate: serine 244, serine 245, asparagine 246, and serine 289. Positions 244, 245, 246, and 289 each coordinate dimethylallyl diphosphate. Serine 244, serine 245, asparagine 246, and serine 289 together coordinate isopentenyl diphosphate.

The protein belongs to the IspH family. The cofactor is [4Fe-4S] cluster.

The catalysed reaction is isopentenyl diphosphate + 2 oxidized [2Fe-2S]-[ferredoxin] + H2O = (2E)-4-hydroxy-3-methylbut-2-enyl diphosphate + 2 reduced [2Fe-2S]-[ferredoxin] + 2 H(+). It catalyses the reaction dimethylallyl diphosphate + 2 oxidized [2Fe-2S]-[ferredoxin] + H2O = (2E)-4-hydroxy-3-methylbut-2-enyl diphosphate + 2 reduced [2Fe-2S]-[ferredoxin] + 2 H(+). It functions in the pathway isoprenoid biosynthesis; dimethylallyl diphosphate biosynthesis; dimethylallyl diphosphate from (2E)-4-hydroxy-3-methylbutenyl diphosphate: step 1/1. Its pathway is isoprenoid biosynthesis; isopentenyl diphosphate biosynthesis via DXP pathway; isopentenyl diphosphate from 1-deoxy-D-xylulose 5-phosphate: step 6/6. In terms of biological role, catalyzes the conversion of 1-hydroxy-2-methyl-2-(E)-butenyl 4-diphosphate (HMBPP) into a mixture of isopentenyl diphosphate (IPP) and dimethylallyl diphosphate (DMAPP). Acts in the terminal step of the DOXP/MEP pathway for isoprenoid precursor biosynthesis. The sequence is that of 4-hydroxy-3-methylbut-2-enyl diphosphate reductase from Corynebacterium diphtheriae (strain ATCC 700971 / NCTC 13129 / Biotype gravis).